A 417-amino-acid polypeptide reads, in one-letter code: Methyltransferase/ribosomally synthesized cyclic peptide lentinulin A precursor ledMA (417 aa).

The interval 1–251 (METPTLNKSG…GVSTFYIPPK (251 aa)) is methyltransferase domain. Catalysis depends on residues Arg72, Tyr76, and Tyr98. S-adenosyl-L-methionine contacts are provided by Tyr98, His100, Val103, Ala130, Gln172, Ala213, Ser244, and Thr245. A clasp domain region spans residues 252–378 (ERKEINVDII…WAFRCAMKEM (127 aa)). Residues 379–399 (PISLLDNAKQSMEEASEQGFP) are precursor leader. Ile401 carries the N-methylisoleucine modification. Residues Val403 and Val404 each carry the N-methylvaline modification. Gly405 bears the N-methylglycine mark. Residues Val406 and Val407 each carry the N-methylvaline modification. N-methylglycine is present on Gly408. Val410 carries the N-methylvaline modification. Gly411 is modified (N-methylglycine). The residue at position 413 (Val413) is an N-methylvaline.

In the N-terminal section; belongs to the precorrin methyltransferase family. As to quaternary structure, homodimer. In terms of processing, ledMA automethylates at Ile-401, Val-403, Val-404, Gly-405, Val-406, Val-407, Gly-408, Val-410, Gly-411 and Val-413 before being processed by the prolyloligopeptidase ledP which likely forms a peptidyl ester upon removal of the follower propeptide, which then undergoes macrocyclization with the N-terminus of the modified core peptide. Peptide backbone alpha-N-methylations change the physicochemical properties of amide bonds to provide structural constraints and other favorable characteristics including biological membrane permeability to peptides.

It functions in the pathway mycotoxin biosynthesis. Its function is as follows. Fusion protein of the methyltransferase ledM and the lentinulin A core peptide; part of the gene cluster that mediates the biosynthesis of lentinulin A, a highly methylated cyclic dodecapeptide with nematodicidal activity. Lentinulin A derives from the C-terminus of the ledMA protein, and it is the ledMA protein that methylates its own C-terminus using S-adenosyl methionine (SAM). The C-terminus is subsequently cleaved off and macrocyclized by the prolyloligopeptidase ledP to give the final product. The polypeptide is Methyltransferase/ribosomally synthesized cyclic peptide lentinulin A precursor ledMA (Lentinula edodes (Shiitake mushroom)).